Here is a 504-residue protein sequence, read N- to C-terminus: ATP synthase subunit alpha (504 aa).

An ATP-binding site is contributed by 169-176; that stretch reads GDRQTGKT.

It belongs to the ATPase alpha/beta chains family. F-type ATPases have 2 components, CF(1) - the catalytic core - and CF(0) - the membrane proton channel. CF(1) has five subunits: alpha(3), beta(3), gamma(1), delta(1), epsilon(1). CF(0) has three main subunits: a(1), b(2) and c(9-12). The alpha and beta chains form an alternating ring which encloses part of the gamma chain. CF(1) is attached to CF(0) by a central stalk formed by the gamma and epsilon chains, while a peripheral stalk is formed by the delta and b chains.

The protein localises to the cell membrane. The enzyme catalyses ATP + H2O + 4 H(+)(in) = ADP + phosphate + 5 H(+)(out). Produces ATP from ADP in the presence of a proton gradient across the membrane. The alpha chain is a regulatory subunit. This is ATP synthase subunit alpha from Clostridium kluyveri (strain NBRC 12016).